The primary structure comprises 125 residues: Large ribosomal subunit protein bL17 (125 aa).

Belongs to the bacterial ribosomal protein bL17 family. In terms of assembly, part of the 50S ribosomal subunit. Contacts protein L32.

The chain is Large ribosomal subunit protein bL17 from Acinetobacter baumannii (strain AB307-0294).